The chain runs to 98 residues: Ferredoxin-like protein (98 aa).

The 4Fe-4S ferredoxin-type domain occupies G57–P87.

To ferredoxins from P.putida and C.tartarivorum, ferredoxin I from A.vinelandii, ferredoxin II from D.desulfuricans.

Could be a 3Fe-4S cluster-containing protein. The polypeptide is Ferredoxin-like protein (fixX) (Rhizobium meliloti (strain 1021) (Ensifer meliloti)).